The following is a 628-amino-acid chain: tRNA (guanine(37)-N(1))-methyltransferase (628 aa).

Residues His265, 303–304, 342–343, and Asn445 contribute to the S-adenosyl-L-methionine site; these read DL and DG.

Belongs to the class I-like SAM-binding methyltransferase superfamily. TRM5/TYW2 family. In terms of assembly, monomer.

It localises to the mitochondrion matrix. The protein localises to the nucleus. Its subcellular location is the cytoplasm. The catalysed reaction is guanosine(37) in tRNA + S-adenosyl-L-methionine = N(1)-methylguanosine(37) in tRNA + S-adenosyl-L-homocysteine + H(+). Functionally, specifically methylates the N1 position of guanosine-37 in various cytoplasmic and mitochondrial tRNAs. Methylation is not dependent on the nature of the nucleoside 5' of the target nucleoside. This is the first step in the biosynthesis of wybutosine (yW), a modified base adjacent to the anticodon of tRNAs and required for accurate decoding. In Mycosarcoma maydis (Corn smut fungus), this protein is tRNA (guanine(37)-N(1))-methyltransferase.